The following is a 296-amino-acid chain: GTPase Era (296 aa).

In terms of domain architecture, Era-type G spans 3–170 (KSGFVTIVGR…KELMFKYIPE (168 aa)). Positions 11-18 (GRPNVGKS) are G1. Residue 11–18 (GRPNVGKS) coordinates GTP. Residues 37–41 (QTTRN) are G2. Residues 58 to 61 (DTPG) are G3. GTP contacts are provided by residues 58-62 (DTPGI) and 120-123 (NKID). The tract at residues 120–123 (NKID) is G4. Residues 149–151 (ISA) form a G5 region. The KH type-2 domain maps to 201 to 278 (LSEEVPHGIA…YIRLWVKVKE (78 aa)).

It belongs to the TRAFAC class TrmE-Era-EngA-EngB-Septin-like GTPase superfamily. Era GTPase family. In terms of assembly, monomer.

The protein resides in the cytoplasm. It is found in the cell membrane. Its function is as follows. An essential GTPase that binds both GDP and GTP, with rapid nucleotide exchange. Plays a role in 16S rRNA processing and 30S ribosomal subunit biogenesis and possibly also in cell cycle regulation and energy metabolism. The polypeptide is GTPase Era (Clostridium botulinum (strain 657 / Type Ba4)).